Here is a 197-residue protein sequence, read N- to C-terminus: Probable chorismate pyruvate-lyase (197 aa).

Over residues 1 to 14 (MRFDAADAHWRETP) the composition is skewed to basic and acidic residues. Positions 1 to 25 (MRFDAADAHWRETPRPGASGAQKDW) are disordered. Substrate contacts are provided by Arg-73, Leu-111, and Glu-173.

The protein belongs to the UbiC family.

It is found in the cytoplasm. The enzyme catalyses chorismate = 4-hydroxybenzoate + pyruvate. It functions in the pathway cofactor biosynthesis; ubiquinone biosynthesis. Removes the pyruvyl group from chorismate, with concomitant aromatization of the ring, to provide 4-hydroxybenzoate (4HB) for the ubiquinone pathway. This is Probable chorismate pyruvate-lyase from Burkholderia thailandensis (strain ATCC 700388 / DSM 13276 / CCUG 48851 / CIP 106301 / E264).